We begin with the raw amino-acid sequence, 476 residues long: Ribulose bisphosphate carboxylase large chain (476 aa).

Positions 116 and 166 each coordinate substrate. Lys168 (proton acceptor) is an active-site residue. Lys170 serves as a coordination point for substrate. Residues Lys194, Asp196, and Glu197 each contribute to the Mg(2+) site. At Lys194 the chain carries N6-carboxylysine. His286 (proton acceptor) is an active-site residue. 3 residues coordinate substrate: Arg287, His319, and Ser371.

The protein belongs to the RuBisCO large chain family. Type I subfamily. As to quaternary structure, heterohexadecamer of 8 large chains and 8 small chains. The cofactor is Mg(2+).

The enzyme catalyses 2 (2R)-3-phosphoglycerate + 2 H(+) = D-ribulose 1,5-bisphosphate + CO2 + H2O. The catalysed reaction is D-ribulose 1,5-bisphosphate + O2 = 2-phosphoglycolate + (2R)-3-phosphoglycerate + 2 H(+). RuBisCO catalyzes two reactions: the carboxylation of D-ribulose 1,5-bisphosphate, the primary event in carbon dioxide fixation, as well as the oxidative fragmentation of the pentose substrate. Both reactions occur simultaneously and in competition at the same active site. This is Ribulose bisphosphate carboxylase large chain from Pseudonocardia dioxanivorans (strain ATCC 55486 / DSM 44775 / JCM 13855 / CB1190).